We begin with the raw amino-acid sequence, 217 residues long: Protein-L-isoaspartate O-methyltransferase (217 aa).

The active site involves serine 62.

Belongs to the methyltransferase superfamily. L-isoaspartyl/D-aspartyl protein methyltransferase family.

It localises to the cytoplasm. The catalysed reaction is [protein]-L-isoaspartate + S-adenosyl-L-methionine = [protein]-L-isoaspartate alpha-methyl ester + S-adenosyl-L-homocysteine. Functionally, catalyzes the methyl esterification of L-isoaspartyl residues in peptides and proteins that result from spontaneous decomposition of normal L-aspartyl and L-asparaginyl residues. It plays a role in the repair and/or degradation of damaged proteins. The polypeptide is Protein-L-isoaspartate O-methyltransferase (Trichlorobacter lovleyi (strain ATCC BAA-1151 / DSM 17278 / SZ) (Geobacter lovleyi)).